A 2352-amino-acid polypeptide reads, in one-letter code: Ectopic P granules protein 5 (2352 aa).

Disordered stretches follow at residues 1 to 112 and 1315 to 1335; these read MAEL…IFPR and KNRESPLPPEIGSPRSRSSAK. Over residues 66–81 the composition is skewed to basic and acidic residues; that stretch reads DSLKREEASEPLKDVR.

Belongs to the EPG5 family. Expressed in pharyngeal and body wall muscles and intestine cells.

Its subcellular location is the cytoplasm. It localises to the cytoplasmic vesicle. The protein resides in the phagosome membrane. Its function is as follows. Involved in the maturation of autophagosomes into autolysosomes during starvation-induced autotrophy. Specifically, involved in the clearance of apoptotic cells by promoting the delivery of engulfed apoptotic cells to the lysosome. The sequence is that of Ectopic P granules protein 5 from Caenorhabditis elegans.